Here is a 320-residue protein sequence, read N- to C-terminus: ADP-L-glycero-D-manno-heptose-6-epimerase (320 aa).

NADP(+)-binding positions include 10–11 (FI), 31–32 (DN), lysine 38, lysine 53, 75–79 (LGACS), and asparagine 92. Tyrosine 139 functions as the Proton acceptor in the catalytic mechanism. Lysine 143 lines the NADP(+) pocket. Residue asparagine 168 participates in substrate binding. Valine 169 and lysine 177 together coordinate NADP(+). Catalysis depends on lysine 177, which acts as the Proton acceptor. Substrate is bound by residues glycine 179, histidine 186, 200–203 (FEGS), arginine 213, and tyrosine 277.

This sequence belongs to the NAD(P)-dependent epimerase/dehydratase family. HldD subfamily. As to quaternary structure, homopentamer. Requires NADP(+) as cofactor.

It catalyses the reaction ADP-D-glycero-beta-D-manno-heptose = ADP-L-glycero-beta-D-manno-heptose. Its pathway is nucleotide-sugar biosynthesis; ADP-L-glycero-beta-D-manno-heptose biosynthesis; ADP-L-glycero-beta-D-manno-heptose from D-glycero-beta-D-manno-heptose 7-phosphate: step 4/4. Functionally, catalyzes the interconversion between ADP-D-glycero-beta-D-manno-heptose and ADP-L-glycero-beta-D-manno-heptose via an epimerization at carbon 6 of the heptose. This Alkalilimnicola ehrlichii (strain ATCC BAA-1101 / DSM 17681 / MLHE-1) protein is ADP-L-glycero-D-manno-heptose-6-epimerase.